Consider the following 386-residue polypeptide: Acetate kinase (386 aa).

N7 is a Mg(2+) binding site. Residue K14 participates in ATP binding. R78 contacts substrate. The Proton donor/acceptor role is filled by D135. ATP is bound by residues H195 to G199, D268 to R270, and G316 to N320. A Mg(2+)-binding site is contributed by E370.

Belongs to the acetokinase family. Homodimer. Mg(2+) serves as cofactor. The cofactor is Mn(2+).

The protein resides in the cytoplasm. It carries out the reaction acetate + ATP = acetyl phosphate + ADP. It functions in the pathway metabolic intermediate biosynthesis; acetyl-CoA biosynthesis; acetyl-CoA from acetate: step 1/2. In terms of biological role, catalyzes the formation of acetyl phosphate from acetate and ATP. Can also catalyze the reverse reaction. The chain is Acetate kinase from Pseudarthrobacter chlorophenolicus (strain ATCC 700700 / DSM 12829 / CIP 107037 / JCM 12360 / KCTC 9906 / NCIMB 13794 / A6) (Arthrobacter chlorophenolicus).